A 467-amino-acid chain; its full sequence is Translation initiation factor eIF2B subunit delta (467 aa).

The tract at residues 1–106 (MGFSAEQAKK…QNPQNSPETD (106 aa)) is disordered. Phosphoserine occurs at positions 16, 19, 21, and 23. A compositionally biased stretch (polar residues) spans 16 to 37 (SPVSESSSVGGTSPATASSVVS). Residue Thr-27 is modified to Phosphothreonine. Phosphoserine occurs at positions 28 and 37. Over residues 51 to 61 (LKKARKQASRR) the composition is skewed to basic residues. Over residues 84–102 (PNKNSNQQKKASKQNPQNS) the composition is skewed to low complexity.

Belongs to the eIF-2B alpha/beta/delta subunits family. As to quaternary structure, component of the translation initiation factor 2B (eIF2B) complex which is a heterodecamer of two sets of five different subunits: alpha, beta, gamma, delta and epsilon. Subunits alpha, beta and delta comprise a regulatory subcomplex and subunits epsilon and gamma comprise a catalytic subcomplex. Within the complex, the hexameric regulatory complex resides at the center, with the two heterodimeric catalytic subcomplexes bound on opposite sides.

Its subcellular location is the cytoplasm. It is found in the cytosol. Functionally, acts as a component of the translation initiation factor 2B (eIF2B) complex, which catalyzes the exchange of GDP for GTP on the eukaryotic initiation factor 2 (eIF2) complex gamma subunit. Its guanine nucleotide exchange factor activity is repressed when bound to eIF2 complex phosphorylated on the alpha subunit, thereby limiting the amount of methionyl-initiator methionine tRNA available to the ribosome and consequently global translation is repressed. This is Translation initiation factor eIF2B subunit delta (tif224) from Schizosaccharomyces pombe (strain 972 / ATCC 24843) (Fission yeast).